Here is a 430-residue protein sequence, read N- to C-terminus: UDP-N-acetylglucosamine 1-carboxyvinyltransferase (430 aa).

22–23 (KN) serves as a coordination point for phosphoenolpyruvate. UDP-N-acetyl-alpha-D-glucosamine is bound at residue Arg102. Cys126 serves as the catalytic Proton donor. Cys126 is modified (2-(S-cysteinyl)pyruvic acid O-phosphothioketal). Residues 131–135 (RPVDL), 172–175 (KVSV), Asp317, and Ile339 contribute to the UDP-N-acetyl-alpha-D-glucosamine site.

It belongs to the EPSP synthase family. MurA subfamily.

It is found in the cytoplasm. The enzyme catalyses phosphoenolpyruvate + UDP-N-acetyl-alpha-D-glucosamine = UDP-N-acetyl-3-O-(1-carboxyvinyl)-alpha-D-glucosamine + phosphate. It participates in cell wall biogenesis; peptidoglycan biosynthesis. Its function is as follows. Cell wall formation. Adds enolpyruvyl to UDP-N-acetylglucosamine. The chain is UDP-N-acetylglucosamine 1-carboxyvinyltransferase from Rhizobium leguminosarum bv. trifolii (strain WSM2304).